A 774-amino-acid polypeptide reads, in one-letter code: Multiple C2 domain and transmembrane region protein 11 (774 aa).

A compositionally biased stretch (gly residues) spans M1–D12. Residues M1 to N30 are disordered. C2 domains lie at G9–Y145, V184–Y307, and L338–Y471. Ca(2+) contacts are provided by D62, N110, D112, and D118. Transmembrane regions (helical) follow at residues L608 to F628 and F722 to F742.

Belongs to the MCTP family. It depends on Ca(2+) as a cofactor. Observed in flowers.

Its subcellular location is the endoplasmic reticulum membrane. Its function is as follows. May function as a signaling molecule by regulating the trafficking of other regulators. The chain is Multiple C2 domain and transmembrane region protein 11 from Arabidopsis thaliana (Mouse-ear cress).